The following is a 374-amino-acid chain: Putative glutamate--cysteine ligase 2-2 (374 aa).

It belongs to the glutamate--cysteine ligase type 2 family. YbdK subfamily.

It carries out the reaction L-cysteine + L-glutamate + ATP = gamma-L-glutamyl-L-cysteine + ADP + phosphate + H(+). Its function is as follows. ATP-dependent carboxylate-amine ligase which exhibits weak glutamate--cysteine ligase activity. This Rhodococcus jostii (strain RHA1) protein is Putative glutamate--cysteine ligase 2-2.